The primary structure comprises 291 residues: Nucleotide-binding protein LMHCC_0126 (291 aa).

13–20 (GMSGAGKT) lines the ATP pocket. GTP is bound at residue 63–66 (DLRG).

This sequence belongs to the RapZ-like family.

Functionally, displays ATPase and GTPase activities. The polypeptide is Nucleotide-binding protein LMHCC_0126 (Listeria monocytogenes serotype 4a (strain HCC23)).